Reading from the N-terminus, the 136-residue chain is Small ribosomal subunit protein uS9 (136 aa).

The protein belongs to the universal ribosomal protein uS9 family.

This is Small ribosomal subunit protein uS9 from Borrelia recurrentis (strain A1).